A 430-amino-acid chain; its full sequence is Arrestin-related trafficking adapter 10 (430 aa).

A disordered region spans residues 55–75 (AEADRHSSRLPQDPQTQYTKE). Over residues 63 to 72 (RLPQDPQTQY) the composition is skewed to polar residues.

This sequence belongs to the ART10 family.

The protein localises to the cytoplasm. Its function is as follows. May regulate endocytosis by recruiting RSP5 ubiquitin ligase activity to specific plasma membrane proteins in response to extracellular stimuli. The chain is Arrestin-related trafficking adapter 10 (ART10) from Eremothecium gossypii (strain ATCC 10895 / CBS 109.51 / FGSC 9923 / NRRL Y-1056) (Yeast).